The sequence spans 704 residues: SH3KBP1-binding protein 1 (704 aa).

Ala-2 carries the N-acetylalanine modification. The 70-residue stretch at 19–88 folds into the BTB domain; it reads EVIHLNVGGK…LRTKELDPRG (70 aa). A disordered region spans residues 146–165; the sequence is VGPQQIGGRPAPVRRSNTMP. Thr-163 carries the post-translational modification Phosphothreonine. 5 WD repeats span residues 233–280, 283–322, 324–359, 428–466, and 548–586; these read RLDW…GGSE, VFHL…WQVQ, VQPI…LRMK, VHRS…GMIS, and LECE…DGLG. A disordered region spans residues 609–704; the sequence is PLASSRGSFP…LKKTLNETSF (96 aa). The segment covering 612–631 has biased composition (low complexity); sequence SSRGSFPSPSPRTSLTSLHS. A PXXXPR motif is present at residues 618-623; that stretch reads PSPSPR. Phosphoserine is present on residues Ser-644 and Ser-646. The short motif at 678–683 is the PXXXPR element; the sequence is PTPAPR. Residue Thr-693 is modified to Phosphothreonine.

The protein belongs to the KCTD3 family. Monomer. Interacts with CUL3; interaction is direct and forms a 5:5 heterodecamer. Interacts (via PXXXPR motifs) with SH3KBP1 (via SH3 domains). Directly interacts with cathepsin B/CTSB.

The protein localises to the lysosome. Functionally, inhibits CBL-SH3KBP1 complex mediated down-regulation of EGFR signaling by sequestration of SH3KBP1. Binds to SH3KBP1 and prevents its interaction with CBL and inhibits translocation of SH3KBP1 to EGFR containing vesicles upon EGF stimulation. The polypeptide is SH3KBP1-binding protein 1 (Shkbp1) (Mus musculus (Mouse)).